A 472-amino-acid polypeptide reads, in one-letter code: Maintenance of mitochondrial morphology protein 1 (472 aa).

Over 1-22 (MAFQQGEAAPVSTQSSLSFTQG) the chain is Lumenal. The helical transmembrane segment at 23-43 (FLLGQLSVVLLIGAFIKFFIF) threads the bilayer. Over 44-472 (GEAPPPPSRG…GSMPEAPGAQ (429 aa)) the chain is Cytoplasmic. Disordered regions lie at residues 51–92 (SRGL…VPSS), 270–303 (LHTP…PKSS), and 370–472 (RMGR…PGAQ). Residues 81-92 (STSNVLRPVPSS) are compositionally biased toward polar residues. Residues 124–365 (QPESLDWFNV…EPRVQVVGLP (242 aa)) enclose the SMP-LTD domain. Positions 270-280 (LHTPSPMPSPP) are enriched in pro residues. Low complexity predominate over residues 281-297 (TAGAQPAAGAQPTDGGD). Over residues 450 to 460 (TRERSLGDDFH) the composition is skewed to basic and acidic residues.

Belongs to the MMM1 family. Homodimer. Component of the ER-mitochondria encounter structure (ERMES) or MDM complex, composed of mmm1, mdm10, mdm12 and mdm34. A mmm1 homodimer associates with one molecule of mdm12 on each side in a pairwise head-to-tail manner, and the SMP-LTD domains of mmm1 and mdm12 generate a continuous hydrophobic tunnel for phospholipid trafficking.

It localises to the endoplasmic reticulum membrane. In terms of biological role, component of the ERMES/MDM complex, which serves as a molecular tether to connect the endoplasmic reticulum (ER) and mitochondria. Components of this complex are involved in the control of mitochondrial shape and protein biogenesis, and function in nonvesicular lipid trafficking between the ER and mitochondria. The mdm12-mmm1 subcomplex functions in the major beta-barrel assembly pathway that is responsible for biogenesis of all outer membrane beta-barrel proteins, and acts in a late step after the SAM complex. The mdm10-mdm12-mmm1 subcomplex further acts in the TOM40-specific pathway after the action of the mdm12-mmm1 complex. Essential for establishing and maintaining the structure of mitochondria and maintenance of mtDNA nucleoids. The protein is Maintenance of mitochondrial morphology protein 1 of Emericella nidulans (strain FGSC A4 / ATCC 38163 / CBS 112.46 / NRRL 194 / M139) (Aspergillus nidulans).